We begin with the raw amino-acid sequence, 423 residues long: D-tagatose-1,6-bisphosphate aldolase subunit GatZ (423 aa).

This sequence belongs to the GatZ/KbaZ family. GatZ subfamily. As to quaternary structure, forms a complex with GatY.

The protein operates within carbohydrate metabolism; D-tagatose 6-phosphate degradation; D-glyceraldehyde 3-phosphate and glycerone phosphate from D-tagatose 6-phosphate: step 2/2. Component of the tagatose-1,6-bisphosphate aldolase GatYZ that is required for full activity and stability of the Y subunit. Could have a chaperone-like function for the proper and stable folding of GatY. When expressed alone, GatZ does not show any aldolase activity. Is involved in the catabolism of galactitol. This Salmonella newport (strain SL254) protein is D-tagatose-1,6-bisphosphate aldolase subunit GatZ.